Reading from the N-terminus, the 328-residue chain is Alpha-tubulin N-acetyltransferase 2 (328 aa).

Positions 5 to 185 constitute an N-acetyltransferase domain; it reads SQVALLPKLS…NNFVVFHRYF (181 aa). Acetyl-CoA contacts are provided by residues 119-132 and 155-164; these read FFVD…GFGK and SVKFLAFLRK. Disordered stretches follow at residues 219–261 and 282–328; these read EYQS…PGKK and GGDP…TPEH. The segment covering 238-248 has biased composition (pro residues); the sequence is TPPPPLPPPLV. Positions 312 to 328 are enriched in polar residues; the sequence is PTRSGVQYNIISGTPEH.

It belongs to the acetyltransferase ATAT1 family.

The enzyme catalyses L-lysyl-[alpha-tubulin] + acetyl-CoA = N(6)-acetyl-L-lysyl-[alpha-tubulin] + CoA + H(+). Specifically acetylates 'Lys-40' in alpha-tubulin on the lumenal side of microtubules. Promotes microtubule destabilization and accelerates microtubule dynamics; this activity may be independent of acetylation activity. Acetylates alpha-tubulin with a slow enzymatic rate, due to a catalytic site that is not optimized for acetyl transfer. Enters the microtubule through each end and diffuses quickly throughout the lumen of microtubules. Acetylates only long/old microtubules because of its slow acetylation rate since it does not have time to act on dynamically unstable microtubules before the enzyme is released. The sequence is that of Alpha-tubulin N-acetyltransferase 2 from Trypanosoma cruzi (strain CL Brener).